Consider the following 1094-residue polypeptide: Probable arabinosyltransferase A (1094 aa).

Transmembrane regions (helical) follow at residues 12-34 (IARL…VPLL), 205-224 (AVML…LAAL), 247-269 (GFAS…VIGA), 322-344 (VWMR…RFVL), 356-375 (SNRV…WLPF), 408-430 (AAVA…IALA), 451-470 (GLLA…TVVV), 519-536 (FAVL…FVLL), 543-565 (GLAS…LLTF), 575-597 (GAFA…RIGL), 604-626 (TLYV…GWFY), 641-663 (IASH…LAAW), and 684-706 (ILAS…GSMA).

This sequence belongs to the emb family.

It is found in the cell membrane. Functionally, arabinosyl transferase responsible for the polymerization of arabinose into the arabinan of arabinogalactan. The chain is Probable arabinosyltransferase A (embA) from Mycobacterium tuberculosis (strain CDC 1551 / Oshkosh).